We begin with the raw amino-acid sequence, 415 residues long: Thylakoid ADP,ATP carrier protein, chloroplastic (415 aa).

A chloroplast-targeting transit peptide spans methionine 1–arginine 61. 5 helical membrane-spanning segments follow: residues isoleucine 106 to glycine 126, leucine 182 to arginine 207, leucine 219 to leucine 239, glycine 273 to valine 293, and leucine 309 to isoleucine 329. Solcar repeat units lie at residues proline 113–leucine 205, leucine 213–serine 296, and serine 307–leucine 387. Position 187 (arginine 187) interacts with ADP. Residue arginine 330 coordinates ADP. Residues glycine 362 to isoleucine 388 traverse the membrane as a helical segment.

This sequence belongs to the mitochondrial carrier (TC 2.A.29) family. As to expression, highly expressed in developing photosynthetic organs such as leaves, flower buds and green siliques. Also detected in roots, flowers, mature leaves and stems.

The protein localises to the plastid. It localises to the chloroplast thylakoid membrane. It is found in the chloroplast envelope. With respect to regulation, KM and Vmax values toward ATP only are increased by m-chlorocarbonyl cyanide phenylhydrazone (CCCP). The corresponding values for ADP are not affected. Its function is as follows. Specifically transports adenine nucleotides. Involved in the uptake of ATP into thylakoids in exchange for lumenal ADP. In Arabidopsis thaliana (Mouse-ear cress), this protein is Thylakoid ADP,ATP carrier protein, chloroplastic (TAAC).